The primary structure comprises 68 residues: Large ribosomal subunit protein eL24 (68 aa).

Residues cysteine 7, cysteine 10, cysteine 33, and cysteine 37 each coordinate Zn(2+). Residues cysteine 7–cysteine 37 form a C4-type zinc finger.

The protein belongs to the eukaryotic ribosomal protein eL24 family. In terms of assembly, part of the 50S ribosomal subunit. Forms a cluster with proteins L3 and L14. Requires Zn(2+) as cofactor.

Functionally, binds to the 23S rRNA. In Thermococcus gammatolerans (strain DSM 15229 / JCM 11827 / EJ3), this protein is Large ribosomal subunit protein eL24.